A 345-amino-acid polypeptide reads, in one-letter code: Probable velvet family sexual development regulator LACBIDRAFT_317102 (345 aa).

2 stretches are compositionally biased toward polar residues: residues 1–13 (MFTT…SYRS) and 24–38 (EIQN…NPPR). 3 disordered regions span residues 1–43 (MFTT…TRRR), 138–189 (ESWT…SPSS), and 310–345 (RKRR…SDED). The region spanning 62–306 (GQTIRAELDE…ARWGVRLNIR (245 aa)) is the Velvet domain. Low complexity-rich tracts occupy residues 141–158 (TSRS…PTLS) and 167–184 (SSPQ…ASTP). The segment covering 336-345 (SEDDEASDED) has biased composition (acidic residues).

The protein belongs to the velvet family.

It is found in the nucleus. Velvet-domain-containing protein that probably acts as a positive regulator of sexual development. This is Probable velvet family sexual development regulator LACBIDRAFT_317102 from Laccaria bicolor (strain S238N-H82 / ATCC MYA-4686) (Bicoloured deceiver).